Reading from the N-terminus, the 175-residue chain is Beta-carotene hydroxylase (175 aa).

One can recognise a Fatty acid hydroxylase domain in the interval 11-136 (FVTVIGMEVI…RGKEGCVSFG (126 aa)).

This sequence belongs to the sterol desaturase family.

It catalyses the reaction all-trans-beta-carotene + 4 reduced [2Fe-2S]-[ferredoxin] + 2 O2 + 4 H(+) = all-trans-zeaxanthin + 4 oxidized [2Fe-2S]-[ferredoxin] + 2 H2O. The protein operates within carotenoid biosynthesis; zeaxanthin biosynthesis. Its function is as follows. Catalyzes the hydroxylation reaction from beta-carotene to zeaxanthin. The protein is Beta-carotene hydroxylase (crtZ) of Pantoea ananas (Erwinia uredovora).